The primary structure comprises 536 residues: GMP synthase [glutamine-hydrolyzing] (536 aa).

The 203-residue stretch at 4 to 206 folds into the Glutamine amidotransferase type-1 domain; that stretch reads KILILDFGSQ…VLDICGARAD (203 aa). Cysteine 85 serves as the catalytic Nucleophile. Catalysis depends on residues histidine 180 and glutamate 182. Positions 207–404 constitute a GMPS ATP-PPase domain; sequence WIMGDYISEA…LGLPYHMVYR (198 aa). 234–240 contacts ATP; that stretch reads SGGVDSS.

In terms of assembly, homodimer.

It carries out the reaction XMP + L-glutamine + ATP + H2O = GMP + L-glutamate + AMP + diphosphate + 2 H(+). It functions in the pathway purine metabolism; GMP biosynthesis; GMP from XMP (L-Gln route): step 1/1. Its function is as follows. Catalyzes the synthesis of GMP from XMP. This Albidiferax ferrireducens (strain ATCC BAA-621 / DSM 15236 / T118) (Rhodoferax ferrireducens) protein is GMP synthase [glutamine-hydrolyzing].